Reading from the N-terminus, the 279-residue chain is Energy-coupling factor transporter ATP-binding protein EcfA2 (279 aa).

Residues 3 to 245 (IALENVNFIY…VVFMEEVQLG (243 aa)) enclose the ABC transporter domain. 40–47 (GHTGSGKS) contacts ATP.

It belongs to the ABC transporter superfamily. Energy-coupling factor EcfA family. As to quaternary structure, forms a stable energy-coupling factor (ECF) transporter complex composed of 2 membrane-embedded substrate-binding proteins (S component), 2 ATP-binding proteins (A component) and 2 transmembrane proteins (T component).

The protein localises to the cell membrane. Its function is as follows. ATP-binding (A) component of a common energy-coupling factor (ECF) ABC-transporter complex. Unlike classic ABC transporters this ECF transporter provides the energy necessary to transport a number of different substrates. This Streptococcus pneumoniae serotype 2 (strain D39 / NCTC 7466) protein is Energy-coupling factor transporter ATP-binding protein EcfA2.